A 501-amino-acid chain; its full sequence is NAD(P)H-quinone oxidoreductase chain 4, chloroplastic (501 aa).

Transmembrane regions (helical) follow at residues 4–24 (FPWL…ILFL), 35–55 (YTIC…CYHF), 84–104 (GLSI…TLAA), 111–129 (SRLL…IGSF), 134–154 (LLLF…LLSM), 168–188 (FILY…GMDL), 209–229 (ALEI…SPII), 243–263 (HYST…YGLI), 273–293 (AHSI…IYAA), 306–326 (IAYS…SITD), 331–351 (GAIL…FLAG), 387–407 (LALP…GIIT), 417–437 (ILIT…SLSM), and 463–483 (LFVS…PDFV).

Belongs to the complex I subunit 4 family.

The protein localises to the plastid. It is found in the chloroplast thylakoid membrane. It carries out the reaction a plastoquinone + NADH + (n+1) H(+)(in) = a plastoquinol + NAD(+) + n H(+)(out). The enzyme catalyses a plastoquinone + NADPH + (n+1) H(+)(in) = a plastoquinol + NADP(+) + n H(+)(out). The sequence is that of NAD(P)H-quinone oxidoreductase chain 4, chloroplastic from Buxus microphylla (Littleleaf boxwood).